A 206-amino-acid chain; its full sequence is Small ribosomal subunit protein uS4 (206 aa).

An S4 RNA-binding domain is found at 96–156 (QRLDNVVYRM…EKAKKQARIV (61 aa)).

This sequence belongs to the universal ribosomal protein uS4 family. In terms of assembly, part of the 30S ribosomal subunit. Contacts protein S5. The interaction surface between S4 and S5 is involved in control of translational fidelity.

Functionally, one of the primary rRNA binding proteins, it binds directly to 16S rRNA where it nucleates assembly of the body of the 30S subunit. In terms of biological role, with S5 and S12 plays an important role in translational accuracy. This is Small ribosomal subunit protein uS4 from Alteromonas mediterranea (strain DSM 17117 / CIP 110805 / LMG 28347 / Deep ecotype).